The chain runs to 331 residues: Geranylgeranyl transferase type-2 subunit beta (331 aa).

At Gly2 the chain carries N-acetylglycine. Thr3 carries the phosphothreonine modification. PFTB repeat units follow at residues 20–61, 68–109, 116–157, 164–205, 212–253, and 260–302; these read LEKH…DLMG, REEI…TLYD, VNKV…ALLG, VEKA…AITS, SDLL…KIIG, and REKL…SLLG. Residue 190–192 coordinates geranylgeranyl diphosphate; the sequence is HAG. 2 residues coordinate Zn(2+): Asp238 and Cys240. Position 241–244 (241–244) interacts with geranylgeranyl diphosphate; it reads YSWW. His290 contacts Zn(2+).

Belongs to the protein prenyltransferase subunit beta family. In terms of assembly, heterotrimer composed of RABGGTA, RABGGTB and CHM; within this trimer, RABGGTA and RABGGTB form the catalytic component B, while CHM (component A) mediates peptide substrate binding. The Rab GGTase dimer (RGGT) interacts with CHM (component A) prior to Rab protein binding; the association is stabilized by geranylgeranyl pyrophosphate (GGpp). The CHM:RGGT:Rab complex is destabilized by GGpp. Interaction of RABGGTB with prenylated PTP4A2 precludes its association with RABGGTA and inhibits enzyme activity. Interacts with CHODL. Interacts with non-phosphorylated form of RAB8A; phosphorylation of RAB8A at 'Thr-72' disrupts this interaction. Zn(2+) serves as cofactor.

It carries out the reaction geranylgeranyl diphosphate + L-cysteinyl-[protein] = S-geranylgeranyl-L-cysteinyl-[protein] + diphosphate. With respect to regulation, the enzymatic reaction requires the aid of a Rab escort protein (also called component A). In terms of biological role, catalyzes the transfer of a geranylgeranyl moiety from geranylgeranyl diphosphate to both cysteines of Rab proteins with the C-terminal sequence -XXCC, -XCXC and -CCXX, such as RAB1A, RAB3A, RAB5A and RAB7A. This is Geranylgeranyl transferase type-2 subunit beta (RABGGTB) from Homo sapiens (Human).